The following is a 304-amino-acid chain: MTWRSLLIQNGGKLSLQRRQLLIQQNGESHTVPLEDIAVIIIENRETLITAPLLSALAEHGATLLTCDEQFLPCGQWLPYAQYHRQLKILKLQLNISEPLKKQLWQHIVRQKILNQAFVADETGNDLAAKRLRTLASEVRSGDTGNREAQAAALYFQALFGEKFTRNDNNAVNAALNYTYAVLRAAVARTLTLYGWLPALGLFHRSELNPFNLADDFIEPLRPLADLTVIHLYEQGRLKAELTPGIKQHLIKTLHYQISIERQHFSTLAAIDKMVSSFQAGVTDKNAKQLKLPEILPLKEYQYE.

Positions 148, 204, and 219 each coordinate Mn(2+).

The protein belongs to the CRISPR-associated endonuclease Cas1 family. In terms of assembly, homodimer, forms a heterotetramer with a Cas2 homodimer. The cofactor is Mg(2+). Mn(2+) is required as a cofactor.

Functionally, CRISPR (clustered regularly interspaced short palindromic repeat), is an adaptive immune system that provides protection against mobile genetic elements (viruses, transposable elements and conjugative plasmids). CRISPR clusters contain spacers, sequences complementary to antecedent mobile elements, and target invading nucleic acids. CRISPR clusters are transcribed and processed into CRISPR RNA (crRNA). Acts as a dsDNA endonuclease. Involved in the integration of spacer DNA into the CRISPR cassette. The polypeptide is CRISPR-associated endonuclease Cas1 (Neisseria meningitidis serogroup C (strain 8013)).